Reading from the N-terminus, the 126-residue chain is Profilin-1A (126 aa).

An actin binding region spans residues 2-36; sequence SWQTYVDTNLVGTGAVTQAAILGLDGNTWATSAGF. The residue at position 104 (K104) is an N6,N6,N6-trimethyllysine.

The protein belongs to the profilin family. Occurs in many kinds of cells as a complex with monomeric actin in a 1:1 ratio.

The protein localises to the cytoplasm. It localises to the cytoskeleton. Functionally, binds to actin and affects the structure of the cytoskeleton. At high concentrations, profilin prevents the polymerization of actin, whereas it enhances it at low concentrations. By binding to PIP2, it inhibits the formation of IP3 and DG. The polypeptide is Profilin-1A (Acanthamoeba castellanii (Amoeba)).